We begin with the raw amino-acid sequence, 20 residues long: Putative 60 kDa spermidine-binding protein (20 aa).

A disordered region spans residues 1–20 (SXAAVVEPPETSQNRIAKGE). The span at 10 to 20 (ETSQNRIAKGE) shows a compositional bias: polar residues.

Dimer of 18 kDa and 60 kDa subunit.

The protein localises to the microsome membrane. The protein resides in the endoplasmic reticulum membrane. In terms of biological role, may have spermidine-binding activity. The sequence is that of Putative 60 kDa spermidine-binding protein from Zea mays (Maize).